Consider the following 124-residue polypeptide: Small ribosomal subunit protein uS12 (124 aa).

Asp89 carries the 3-methylthioaspartic acid modification.

It belongs to the universal ribosomal protein uS12 family. As to quaternary structure, part of the 30S ribosomal subunit. Contacts proteins S8 and S17. May interact with IF1 in the 30S initiation complex.

With S4 and S5 plays an important role in translational accuracy. Its function is as follows. Interacts with and stabilizes bases of the 16S rRNA that are involved in tRNA selection in the A site and with the mRNA backbone. Located at the interface of the 30S and 50S subunits, it traverses the body of the 30S subunit contacting proteins on the other side and probably holding the rRNA structure together. The combined cluster of proteins S8, S12 and S17 appears to hold together the shoulder and platform of the 30S subunit. This chain is Small ribosomal subunit protein uS12, found in Yersinia pestis (strain Pestoides F).